Consider the following 191-residue polypeptide: Calcium-activated potassium channel subunit beta-1 (191 aa).

At 1 to 18 (MVKKLVMAQKRGETRALC) the chain is on the cytoplasmic side. Residues 19–39 (LGVTMVVCAVITYYILVTTVL) traverse the membrane as a helical segment. Over 40–157 (PLYQKSVWTQ…FQRLYGPQAL (118 aa)) the chain is Extracellular. 2 N-linked (GlcNAc...) asparagine glycosylation sites follow: Asn80 and Asn142. A helical membrane pass occupies residues 158–178 (LFSLFWPTFLLTGGLLIIAMV). Residues 179-191 (KSNQYLSILAAQK) lie on the Cytoplasmic side of the membrane.

Belongs to the KCNMB (TC 8.A.14.1) family. KCNMB1 subfamily. In terms of assembly, interacts with KCNMA1 tetramer. There are probably 4 molecules of KCMNB1 per KCNMA1 tetramer. N-glycosylated. As to expression, abundantly expressed in smooth muscle. Low levels of expression in most other tissues. Within the brain, relatively high levels found in hippocampus and corpus callosum.

The protein resides in the membrane. Functionally, regulatory subunit of the calcium activated potassium KCNMA1 (maxiK) channel. Modulates the calcium sensitivity and gating kinetics of KCNMA1, thereby contributing to KCNMA1 channel diversity. Increases the apparent Ca(2+)/voltage sensitivity of the KCNMA1 channel. It also modifies KCNMA1 channel kinetics and alters its pharmacological properties. It slows down the activation and the deactivation kinetics of the channel. Acts as a negative regulator of smooth muscle contraction by enhancing the calcium sensitivity to KCNMA1. Its presence is also a requirement for internal binding of the KCNMA1 channel opener dehydrosoyasaponin I (DHS-1) triterpene glycoside and for external binding of the agonist hormone 17-beta-estradiol (E2). Increases the binding activity of charybdotoxin (CTX) toxin to KCNMA1 peptide blocker by increasing the CTX association rate and decreasing the dissociation rate. The chain is Calcium-activated potassium channel subunit beta-1 (KCNMB1) from Homo sapiens (Human).